Reading from the N-terminus, the 105-residue chain is Flagellar transcriptional regulator FlhD (105 aa).

It belongs to the FlhD family. In terms of assembly, homodimer; disulfide-linked. Forms a heterohexamer composed of two FlhC and four FlhD subunits. Each FlhC binds a FlhD dimer, forming a heterotrimer, and a hexamer assembles by dimerization of two heterotrimers.

It localises to the cytoplasm. Functions in complex with FlhC as a master transcriptional regulator that regulates transcription of several flagellar and non-flagellar operons by binding to their promoter region. Activates expression of class 2 flagellar genes, including fliA, which is a flagellum-specific sigma factor that turns on the class 3 genes. Also regulates genes whose products function in a variety of physiological pathways. This Ralstonia pickettii (strain 12J) protein is Flagellar transcriptional regulator FlhD.